Consider the following 91-residue polypeptide: DNA-directed RNA polymerase subunit omega (91 aa).

Positions 66 to 91 are disordered; the sequence is QMPPPLPNFPGAANREATGAEDAAGE.

The protein belongs to the RNA polymerase subunit omega family. The RNAP catalytic core consists of 2 alpha, 1 beta, 1 beta' and 1 omega subunit. When a sigma factor is associated with the core the holoenzyme is formed, which can initiate transcription.

It carries out the reaction RNA(n) + a ribonucleoside 5'-triphosphate = RNA(n+1) + diphosphate. Its function is as follows. Promotes RNA polymerase assembly. Latches the N- and C-terminal regions of the beta' subunit thereby facilitating its interaction with the beta and alpha subunits. The protein is DNA-directed RNA polymerase subunit omega of Acidithiobacillus ferrooxidans (strain ATCC 23270 / DSM 14882 / CIP 104768 / NCIMB 8455) (Ferrobacillus ferrooxidans (strain ATCC 23270)).